A 350-amino-acid chain; its full sequence is Anthranilate phosphoribosyltransferase (350 aa).

Residues G94, 97 to 98, T102, 104 to 107, 122 to 130, and S134 each bind 5-phospho-alpha-D-ribose 1-diphosphate; these read GS, NVST, and KHGNRSVSS. Residue G94 coordinates anthranilate. S106 lines the Mg(2+) pocket. Anthranilate is bound at residue N125. R180 contributes to the anthranilate binding site. Residues D239 and E240 each contribute to the Mg(2+) site.

This sequence belongs to the anthranilate phosphoribosyltransferase family. In terms of assembly, homodimer. The cofactor is Mg(2+).

It catalyses the reaction N-(5-phospho-beta-D-ribosyl)anthranilate + diphosphate = 5-phospho-alpha-D-ribose 1-diphosphate + anthranilate. It functions in the pathway amino-acid biosynthesis; L-tryptophan biosynthesis; L-tryptophan from chorismate: step 2/5. In terms of biological role, catalyzes the transfer of the phosphoribosyl group of 5-phosphorylribose-1-pyrophosphate (PRPP) to anthranilate to yield N-(5'-phosphoribosyl)-anthranilate (PRA). This is Anthranilate phosphoribosyltransferase from Geotalea uraniireducens (strain Rf4) (Geobacter uraniireducens).